Here is a 582-residue protein sequence, read N- to C-terminus: 15-cis-phytoene desaturase, chloroplastic/chromoplastic (582 aa).

A chloroplast and chromoplast-targeting transit peptide spans M1 to E93. FAD-binding positions include A121, E140–A141, K148, H165–I166, and Y171. R306 lines the substrate pocket. An FAD-binding site is contributed by D537. A545 lines the substrate pocket. M547 serves as a coordination point for FAD.

This sequence belongs to the carotenoid/retinoid oxidoreductase family. Homotetramer. It depends on FAD as a cofactor. Expressed in flower buds and lips. Lower expression in leaves and roots.

The protein localises to the plastid. It localises to the chloroplast. It is found in the chromoplast. Its subcellular location is the membrane. It catalyses the reaction 2 a plastoquinone + 15-cis-phytoene = 9,9',15-tri-cis-zeta-carotene + 2 a plastoquinol. Its pathway is carotenoid biosynthesis; lycopene biosynthesis. Its function is as follows. Converts phytoene into zeta-carotene via the intermediary of phytofluene by the symmetrical introduction of two double bonds at the C-11 and C-11' positions of phytoene with a concomitant isomerization of two neighboring double bonds at the C9 and C9' positions from trans to cis. The polypeptide is 15-cis-phytoene desaturase, chloroplastic/chromoplastic (PDS) (Oncidium hybrid cultivar (Orchid)).